The chain runs to 279 residues: Tryptophan synthase alpha chain (279 aa).

Active-site proton acceptor residues include Glu50 and Asp61.

This sequence belongs to the TrpA family. In terms of assembly, tetramer of two alpha and two beta chains.

It carries out the reaction (1S,2R)-1-C-(indol-3-yl)glycerol 3-phosphate + L-serine = D-glyceraldehyde 3-phosphate + L-tryptophan + H2O. It participates in amino-acid biosynthesis; L-tryptophan biosynthesis; L-tryptophan from chorismate: step 5/5. The alpha subunit is responsible for the aldol cleavage of indoleglycerol phosphate to indole and glyceraldehyde 3-phosphate. The chain is Tryptophan synthase alpha chain from Brucella melitensis biotype 1 (strain ATCC 23456 / CCUG 17765 / NCTC 10094 / 16M).